Here is a 727-residue protein sequence, read N- to C-terminus: Pollen-specific leucine-rich repeat extensin-like protein 3 (727 aa).

A signal peptide spans 1–22 (MPHIYKQPLGIFQGFVPTLTDA). Residues 19–43 (LTDAEVSFIAQRQLLTLPENGELPD) form an LRR 1 repeat. Asn80 carries N-linked (GlcNAc...) asparagine glycosylation. 9 LRR repeats span residues 107–131 (VAVV…LGLM), 132–154 (TDVA…SFEK), 156–179 (SLMH…VLSW), 180–202 (PAVK…ELFK), 203–226 (KDLD…LGES), 228–249 (ASVV…IGNM), 250–273 (KNLN…IGKL), 275–296 (NVNV…SFVG), and 297–321 (LTSM…ICKL). Residue Asn326 is glycosylated (N-linked (GlcNAc...) asparagine). Residues 381-727 (SKDKCAGGSS…SPPPPMFQGY (347 aa)) are disordered. Pro residues-rich tracts occupy residues 397–419 (SPSP…PQPN), 446–457 (SPPPASSPPTSP), 466–479 (VHKP…PQPN), 492–677 (SPPP…PKMS), and 718–727 (SPPPPMFQGY). The interval 432 to 727 (SPPPPQQPHH…SPPPPMFQGY (296 aa)) is contains the Ser-Pro(4) repeats.

In terms of processing, hydroxylated on proline residues in the S-P-P-P-P repeat. O-glycosylated on hydroxyprolines. In terms of tissue distribution, expressed in flowers, stamen, pollen, and pollinated carpels.

The protein localises to the secreted. It is found in the cell wall. Functionally, modulates cell morphogenesis by regulating cell wall formation and assembly, and/or growth polarization. In Arabidopsis thaliana (Mouse-ear cress), this protein is Pollen-specific leucine-rich repeat extensin-like protein 3 (PEX3).